The following is a 512-amino-acid chain: Chlorogenic acid esterase (512 aa).

The first 18 residues, 1–18 (MLLRLCIIATLLVSHCVA), serve as a signal peptide directing secretion. N-linked (GlcNAc...) asparagine glycans are attached at residues Asn47, Asn80, and Asn98. A disulfide bond links Cys92 and Cys120. The active-site Acyl-ester intermediate is Ser230. N-linked (GlcNAc...) asparagine glycosylation occurs at Asn271. A disulfide bridge connects residues Cys281 and Cys292. Residues Asn295, Asn322, and Asn328 are each glycosylated (N-linked (GlcNAc...) asparagine). Glu351 acts as the Charge relay system in catalysis. Asn391 and Asn402 each carry an N-linked (GlcNAc...) asparagine glycan. His416 serves as the catalytic Charge relay system. N-linked (GlcNAc...) asparagine glycosylation is present at Asn474.

This sequence belongs to the type-B carboxylesterase/lipase family.

The protein localises to the secreted. It catalyses the reaction chlorogenate + H2O = L-quinate + (E)-caffeate + H(+). Functionally, extracellular chlorogenic acid esterase that releases caffeic acid from chlorogenic acid (CGA) contained in natural substrates such as apple marc and coffee pulp. Shows no activity towards 5-O-p-coumaroyl quinic acid, another quinic ester derivative, and rosmarinic acid, another caffeic ester derivative. This Aspergillus niger protein is Chlorogenic acid esterase.